An 859-amino-acid polypeptide reads, in one-letter code: Kinesin-like protein KIN-14T (859 aa).

Residues Asn-91–Ile-411 form the Kinesin motor domain. Position 168 to 175 (Gly-168 to Thr-175) interacts with ATP. A coiled-coil region spans residues Gln-422–Lys-463. The disordered stretch occupies residues Leu-511–Asn-530. A compositionally biased stretch (polar residues) spans Val-518 to Asn-530.

The protein belongs to the TRAFAC class myosin-kinesin ATPase superfamily. Kinesin family. KIN-14 subfamily.

This is Kinesin-like protein KIN-14T from Arabidopsis thaliana (Mouse-ear cress).